The following is a 205-amino-acid chain: Thymidylate kinase (205 aa).

Position 10-17 (10-17 (GIDGAGKS)) interacts with ATP.

It belongs to the thymidylate kinase family.

It catalyses the reaction dTMP + ATP = dTDP + ADP. Its function is as follows. Phosphorylation of dTMP to form dTDP in both de novo and salvage pathways of dTTP synthesis. In Ralstonia pickettii (strain 12J), this protein is Thymidylate kinase.